Here is a 290-residue protein sequence, read N- to C-terminus: uncharacterized protein (290 aa).

Disordered stretches follow at residues 105–156 (LKHK…KLTV) and 259–290 (EGAQ…KSKK). The segment covering 114–130 (KATQQARKRNFISSKSK) has biased composition (polar residues). Composition is skewed to basic and acidic residues over residues 143–156 (RESK…KLTV) and 261–280 (AQRD…EPVL).

This is an uncharacterized protein from Homo sapiens (Human).